The primary structure comprises 93 residues: Large ribosomal subunit protein eL42 (93 aa).

The Zn(2+) site is built by Cys11 and Cys14. The C4-type zinc finger occupies 11–75; the sequence is CPNCDEHHQL…TDLKYRCSEC (65 aa). The segment at 24–62 is disordered; that stretch reads KVRSGRSSGMKWDARRTKRANASIGNHGRFSKVPVGNKP. Zn(2+)-binding residues include Cys72 and Cys75.

The protein belongs to the eukaryotic ribosomal protein eL42 family. Part of the 50S ribosomal subunit. It depends on Zn(2+) as a cofactor.

Functionally, binds to the 23S rRNA. In Halobacterium salinarum (strain ATCC 700922 / JCM 11081 / NRC-1) (Halobacterium halobium), this protein is Large ribosomal subunit protein eL42.